Consider the following 213-residue polypeptide: Golgi SNAP receptor complex member 2 homolog memb-1 (213 aa).

Topologically, residues 1 to 189 are cytoplasmic; sequence MEALYQSTNF…QVIDRRVRED (189 aa). Residues 190 to 210 form a helical; Anchor for type IV membrane protein membrane-spanning segment; the sequence is WILFVIGCIVCCIFMYAFYRF. Residues 211–213 are Vesicular-facing; sequence WRG.

Belongs to the GOSR2 family. As to quaternary structure, part of a unique SNARE complex.

It localises to the golgi apparatus. It is found in the cis-Golgi network membrane. Its subcellular location is the golgi apparatus membrane. The protein localises to the endoplasmic reticulum membrane. Involved in transport of proteins from the cis/medial-Golgi to the trans-Golgi network. In Caenorhabditis elegans, this protein is Golgi SNAP receptor complex member 2 homolog memb-1.